The chain runs to 295 residues: Voltage-gated potassium channel (295 aa).

The Cytoplasmic portion of the chain corresponds to 1–38 (MSVERWVFPGCSVMARFRRGLSDLGGRVRNIGDVMEHP). Residues 39-63 (LVELGVSYAALLSVIVVVVEYTMQL) traverse the membrane as a helical segment. Over 64–67 (SGEY) the chain is Extracellular. The helical transmembrane segment at 68-92 (LVRLYLVDLILVIILWADYAYRAYK) threads the bilayer. Residues 93-96 (SGDP) are Cytoplasmic-facing. Residues 97–105 (AGYVKKTLY) constitute an intramembrane region (helical). Topologically, residues 106 to 108 (EIP) are extracellular. The chain crosses the membrane as a helical; Voltage-sensor span at residues 109-125 (ALVPAGLLALIEGHLAG). The Cytoplasmic segment spans residues 126-128 (LGL). Residues 129–145 (FRLVRLLRFLRILLIIS) form a helical; Voltage-sensor membrane-spanning segment. The Cytoplasmic portion of the chain corresponds to 146–159 (RGSKFLSAIADAAD). The helical transmembrane segment at 160 to 184 (KIRFYHLFGAVMLTVLYGAFAIYIV) threads the bilayer. The Extracellular segment spans residues 185-195 (EYPDPNSSIKS). Positions 196-208 (VFDALWWAVVTAT) form an intramembrane region, pore-forming. Positions 209-214 (TVGYGD) match the Selectivity filter motif. Residues 209–221 (TVGYGDVVPATPI) are Extracellular-facing. A helical membrane pass occupies residues 222-253 (GKVIGIAVMLTGISALTLLIGTVSNMFQKILV). Topologically, residues 254 to 295 (GEPEPSCSPAKLAEMVSSMSEEEFEEFVRTLKNLRRLENSMK) are cytoplasmic.

Belongs to the potassium channel family.

It localises to the cell membrane. Its function is as follows. Mediates a strong voltage-dependent potassium ion permeability of excitable membranes. Assuming opened or closed conformations in response to the voltage difference across the membrane, the protein forms a potassium-selective channel through which potassium ions may pass in accordance with their electrochemical gradient. This is Voltage-gated potassium channel from Aeropyrum pernix (strain ATCC 700893 / DSM 11879 / JCM 9820 / NBRC 100138 / K1).